A 532-amino-acid chain; its full sequence is KICSTOR complex protein ITFG2 (532 aa).

The stretch at 19–48 (FPHAICLGDVDNDTLNELVVGDTSGKLSVY) is one FG-GAP 1; atypical repeat. Residue Ser-104 is modified to Phosphoserine. One copy of the FG-GAP 2; atypical repeat lies at 126-155 (NTKVMLISDIDGDGRCELVVGYTDRVVRAF). Residues 248–271 (PHPQQERLHSPHRQHQASHSPDSS) are disordered.

In terms of assembly, part of the KICSTOR complex composed of KPTN, ITFG2, KICS2 and SZT2. SZT2 probably serves as a link between the other three proteins in the KICSTOR complex and may mediate the direct interaction with the GATOR complex via GATOR1. The KICSTOR complex interacts directly with the GATOR1 complex and most probably indirectly with the GATOR2 complex in an amino acid-independent manner.

It is found in the lysosome membrane. As part of the KICSTOR complex functions in the amino acid-sensing branch of the TORC1 signaling pathway. Recruits, in an amino acid-independent manner, the GATOR1 complex to the lysosomal membranes and allows its interaction with GATOR2 and the RAG GTPases. Functions upstream of the RAG GTPases and is required to negatively regulate mTORC1 signaling in absence of amino acids. In absence of the KICSTOR complex mTORC1 is constitutively localized to the lysosome and activated. The KICSTOR complex is also probably involved in the regulation of mTORC1 by glucose. This is KICSTOR complex protein ITFG2 from Bos taurus (Bovine).